The chain runs to 590 residues: Oleate hydratase (590 aa).

4 residues coordinate FAD: Ala33, Glu56, Ser64, and Glu82. Glu82 functions as the Proton acceptor in the catalytic mechanism. The Proton donor role is filled by Tyr200. FAD contacts are provided by Val249, Ser291, Thr508, and Ser512.

The protein belongs to the oleate hydratase family. Monomer and homodimer. Both forms seem to be active. FAD is required as a cofactor.

It carries out the reaction (R)-10-hydroxyoctadecanoate = (9Z)-octadecenoate + H2O. The enzyme catalyses (9Z)-octadecenoate + H2O = 10-hydroxyoctadecanoate. The catalysed reaction is (9Z)-hexadecenoate + H2O = 10-hydroxyhexadecanoate. It catalyses the reaction (9Z,12Z)-octadecadienoate + H2O = (12Z)-10-hydroxyoctadecenoate. It carries out the reaction (12Z)-10-hydroxyoctadecenoate + H2O = 10,13-dihydroxyoctadecanoate. The enzyme catalyses (9Z,12Z,15Z)-octadecatrienoate + H2O = (12Z,15Z)-10-hydroxyoctadecadienoate. It participates in lipid metabolism; fatty acid metabolism. In terms of biological role, catalyzes the hydration of oleate at its cis-9-double bond to yield 10-hydroxyoctadecanoate, probably in the (R) configuration, and of linoleate at its cis-9- and cis-12-double bond to yield 10-hydroxy-12-octadecenoate and 10,13-dihydroxyoctadecanoate. Is not active on trans-double bonds and esterified fatty acids as substrate; is only active on cis-9- and/or cis-12-double bond of C16 and C18 fatty acids without any trans-configurations, producing 10-hydroxy and 10,13-dihydroxy derivatives. Appears to play a role in oleic acid detoxification and bacterial virulence. The sequence is that of Oleate hydratase (sph) from Streptococcus pyogenes serotype M49 (strain NZ131).